The primary structure comprises 305 residues: Translation initiation factor eIF2B subunit alpha (305 aa).

Lys-35 is subject to N6-acetyllysine.

The protein belongs to the eIF-2B alpha/beta/delta subunits family. As to quaternary structure, component of the translation initiation factor 2B (eIF2B) complex which is a heterodecamer of two sets of five different subunits: alpha, beta, gamma, delta and epsilon. Subunits alpha, beta and delta comprise a regulatory subcomplex and subunits epsilon and gamma comprise a catalytic subcomplex. Within the complex, the hexameric regulatory complex resides at the center, with the two heterodimeric catalytic subcomplexes bound on opposite sides.

The protein resides in the cytoplasm. It localises to the cytosol. Its activity is regulated as follows. Activated by the chemical integrated stress response (ISR) inhibitor ISRIB which stimulates guanine nucleotide exchange factor activity for both phosphorylated and unphosphorylated eIF2. Functionally, acts as a component of the translation initiation factor 2B (eIF2B) complex, which catalyzes the exchange of GDP for GTP on eukaryotic initiation factor 2 (eIF2) gamma subunit. Its guanine nucleotide exchange factor activity is repressed when bound to eIF2 complex phosphorylated on the alpha subunit, thereby limiting the amount of methionyl-initiator methionine tRNA available to the ribosome and consequently global translation is repressed. The polypeptide is Translation initiation factor eIF2B subunit alpha (EIF2B1) (Pongo abelii (Sumatran orangutan)).